Reading from the N-terminus, the 946-residue chain is Serine/threonine-protein kinase PLK4 (946 aa).

In terms of domain architecture, Protein kinase spans 12–265 (FKVLNLLGKG…LSSVLDHAFM (254 aa)). ATP contacts are provided by residues 18–26 (LGKGSFACV) and K41. D136 functions as the Proton acceptor in the catalytic mechanism. The interval 330–395 (HPAERSNGGS…TYGKPSSFSE (66 aa)) is disordered. Residues 378-394 (RSGTSQSQTYGKPSSFS) are compositionally biased toward polar residues. The region spanning 566–679 (TLRSIISPLN…AKFIQLVRSK (114 aa)) is the Cryptic POLO box 1 (CPB1) domain. A Cryptic POLO box 2 (CPB2) domain is found at 680–792 (MPKVTYYTRY…GRRPAITESP (113 aa)). Residues 789–828 (TESPRTQLTVDSARERKDEQSSANRVLHSSATSPPQIPNI) are disordered. Over residues 809–828 (SSANRVLHSSATSPPQIPNI) the composition is skewed to polar residues. A POLO box domain is found at 864–942 (QVLKSVFVEN…LSSILMLFAS (79 aa)).

Belongs to the protein kinase superfamily. Ser/Thr protein kinase family. CDC5/Polo subfamily. As to quaternary structure, homodimer. In terms of processing, ubiquitinated; leading to its degradation by the proteasome.

It is found in the cytoplasm. The protein resides in the cytoskeleton. It localises to the microtubule organizing center. Its subcellular location is the centrosome. The protein localises to the centriole. It carries out the reaction L-seryl-[protein] + ATP = O-phospho-L-seryl-[protein] + ADP + H(+). The catalysed reaction is L-threonyl-[protein] + ATP = O-phospho-L-threonyl-[protein] + ADP + H(+). Its function is as follows. Serine/threonine-protein kinase that plays a central role in centriole duplication. Able to trigger procentriole formation on the surface of the parental centriole cylinder, leading to the recruitment of centriole biogenesis proteins such as sass6, cpap, ccp110, cep135 and gamma-tubulin. When overexpressed, it is able to induce centrosome amplification through the simultaneous generation of multiple procentrioles adjoining each parental centriole during S phase. Its central role in centriole replication suggests a possible role in tumorigenesis, centrosome aberrations being frequently observed in tumors. Also involved in deuterosome-mediated centriole amplification in multiciliated that can generate more than 100 centrioles. This chain is Serine/threonine-protein kinase PLK4, found in Xenopus tropicalis (Western clawed frog).